A 477-amino-acid polypeptide reads, in one-letter code: Aspartyl/glutamyl-tRNA(Asn/Gln) amidotransferase subunit B (477 aa).

It belongs to the GatB/GatE family. GatB subfamily. In terms of assembly, heterotrimer of A, B and C subunits.

The catalysed reaction is L-glutamyl-tRNA(Gln) + L-glutamine + ATP + H2O = L-glutaminyl-tRNA(Gln) + L-glutamate + ADP + phosphate + H(+). The enzyme catalyses L-aspartyl-tRNA(Asn) + L-glutamine + ATP + H2O = L-asparaginyl-tRNA(Asn) + L-glutamate + ADP + phosphate + 2 H(+). Its function is as follows. Allows the formation of correctly charged Asn-tRNA(Asn) or Gln-tRNA(Gln) through the transamidation of misacylated Asp-tRNA(Asn) or Glu-tRNA(Gln) in organisms which lack either or both of asparaginyl-tRNA or glutaminyl-tRNA synthetases. The reaction takes place in the presence of glutamine and ATP through an activated phospho-Asp-tRNA(Asn) or phospho-Glu-tRNA(Gln). The chain is Aspartyl/glutamyl-tRNA(Asn/Gln) amidotransferase subunit B from Legionella pneumophila subsp. pneumophila (strain Philadelphia 1 / ATCC 33152 / DSM 7513).